A 212-amino-acid chain; its full sequence is Uracil phosphoribosyltransferase (212 aa).

5-phospho-alpha-D-ribose 1-diphosphate contacts are provided by residues Arg78, Arg103, and 130-138 (DPMLATGGS). Uracil is bound by residues Ile193 and 198–200 (GDA). 5-phospho-alpha-D-ribose 1-diphosphate is bound at residue Asp199.

Belongs to the UPRTase family. The cofactor is Mg(2+).

It carries out the reaction UMP + diphosphate = 5-phospho-alpha-D-ribose 1-diphosphate + uracil. Its pathway is pyrimidine metabolism; UMP biosynthesis via salvage pathway; UMP from uracil: step 1/1. With respect to regulation, allosterically activated by GTP. Its function is as follows. Catalyzes the conversion of uracil and 5-phospho-alpha-D-ribose 1-diphosphate (PRPP) to UMP and diphosphate. The protein is Uracil phosphoribosyltransferase of Pseudomonas paraeruginosa (strain DSM 24068 / PA7) (Pseudomonas aeruginosa (strain PA7)).